Here is a 151-residue protein sequence, read N- to C-terminus: Ribosome maturation factor RimP (151 aa).

The protein belongs to the RimP family.

It localises to the cytoplasm. Its function is as follows. Required for maturation of 30S ribosomal subunits. The polypeptide is Ribosome maturation factor RimP (Caldicellulosiruptor bescii (strain ATCC BAA-1888 / DSM 6725 / KCTC 15123 / Z-1320) (Anaerocellum thermophilum)).